The following is a 385-amino-acid chain: Anhydro-N-acetylmuramic acid kinase (385 aa).

ATP is bound at residue Gly-12–Asp-19.

It belongs to the anhydro-N-acetylmuramic acid kinase family.

The enzyme catalyses 1,6-anhydro-N-acetyl-beta-muramate + ATP + H2O = N-acetyl-D-muramate 6-phosphate + ADP + H(+). It functions in the pathway amino-sugar metabolism; 1,6-anhydro-N-acetylmuramate degradation. The protein operates within cell wall biogenesis; peptidoglycan recycling. In terms of biological role, catalyzes the specific phosphorylation of 1,6-anhydro-N-acetylmuramic acid (anhMurNAc) with the simultaneous cleavage of the 1,6-anhydro ring, generating MurNAc-6-P. Is required for the utilization of anhMurNAc either imported from the medium or derived from its own cell wall murein, and thus plays a role in cell wall recycling. The sequence is that of Anhydro-N-acetylmuramic acid kinase from Bacillus thuringiensis (strain Al Hakam).